The chain runs to 541 residues: 2-succinyl-5-enolpyruvyl-6-hydroxy-3-cyclohexene-1-carboxylate synthase (541 aa).

The protein belongs to the TPP enzyme family. MenD subfamily. Homodimer. Mg(2+) is required as a cofactor. Requires Mn(2+) as cofactor. The cofactor is thiamine diphosphate.

It catalyses the reaction isochorismate + 2-oxoglutarate + H(+) = 5-enolpyruvoyl-6-hydroxy-2-succinyl-cyclohex-3-ene-1-carboxylate + CO2. The protein operates within quinol/quinone metabolism; 1,4-dihydroxy-2-naphthoate biosynthesis; 1,4-dihydroxy-2-naphthoate from chorismate: step 2/7. It functions in the pathway quinol/quinone metabolism; menaquinone biosynthesis. Its function is as follows. Catalyzes the thiamine diphosphate-dependent decarboxylation of 2-oxoglutarate and the subsequent addition of the resulting succinic semialdehyde-thiamine pyrophosphate anion to isochorismate to yield 2-succinyl-5-enolpyruvyl-6-hydroxy-3-cyclohexene-1-carboxylate (SEPHCHC). The sequence is that of 2-succinyl-5-enolpyruvyl-6-hydroxy-3-cyclohexene-1-carboxylate synthase from Rhodococcus jostii (strain RHA1).